A 501-amino-acid polypeptide reads, in one-letter code: DEAD-box ATP-dependent RNA helicase 36 (501 aa).

The segment at 1-68 is disordered; the sequence is MEVDGEARPF…AAAVTEHAGD (68 aa). The span at 36–46 shows a compositional bias: pro residues; it reads EEPPNPSPSPA. The segment covering 59-68 has biased composition (low complexity); sequence AAAVTEHAGD. Residues 77-105 carry the Q motif motif; the sequence is STFAELGLSQWLVDVCDSLGMRVPTAVQR. Residues 108-281 form the Helicase ATP-binding domain; sequence IPRALEGRDV…ELSGNNSYFF (174 aa). 121 to 128 provides a ligand contact to ATP; the sequence is AETGSGKT. The DEAD box signature appears at 229–232; sequence DEAD. Residues 292–456 form the Helicase C-terminal domain; that stretch reads TLKQLYIHVP…AYDGEMRDVN (165 aa). Positions 473–486 are enriched in basic and acidic residues; that stretch reads MADEGHEDKVQARK. The segment at 473–501 is disordered; it reads MADEGHEDKVQARKEQKKRAQERKRKHDE. Residues 475-501 adopt a coiled-coil conformation; that stretch reads DEGHEDKVQARKEQKKRAQERKRKHDE. Basic residues predominate over residues 487 to 501; that stretch reads EQKKRAQERKRKHDE.

The protein belongs to the DEAD box helicase family. DDX49/DBP8 subfamily.

It catalyses the reaction ATP + H2O = ADP + phosphate + H(+). The sequence is that of DEAD-box ATP-dependent RNA helicase 36 from Oryza sativa subsp. japonica (Rice).